A 1031-amino-acid chain; its full sequence is GTPase activating protein Gyp51 (1031 aa).

Basic and acidic residues predominate over residues Met1 to Glu32. Disordered stretches follow at residues Met1–Asn229, Phe278–Asp317, Asp339–Ala371, Asn420–Val459, and Lys490–Pro520. Residues Thr43 to Gln59 are compositionally biased toward polar residues. Positions Phe62–Ile78 are enriched in acidic residues. Polar residues predominate over residues Ser105–Asn117. A compositionally biased stretch (basic and acidic residues) spans Glu195–Glu217. A compositionally biased stretch (acidic residues) spans Ser219 to Asn229. Residues Phe278–Glu306 are compositionally biased toward polar residues. Composition is skewed to polar residues over residues Asn420 to Gln429, Gly436 to Pro455, and Thr493 to His505. The Rab-GAP TBC domain maps to His610–Gly806. The helical transmembrane segment at Leu798–Leu818 threads the bilayer.

The protein belongs to the GYP5 family.

The protein localises to the membrane. The protein resides in the cytoplasm. Its function is as follows. GTPase-activating protein involved in ER to Golgi trafficking and polarized exocytosis. This Schizosaccharomyces pombe (strain 972 / ATCC 24843) (Fission yeast) protein is GTPase activating protein Gyp51 (gyp51).